The chain runs to 65 residues: MNGQERNSISKGLQVDIVLKADQKTGKLTRGTVKDILTKSNFHPHGIKVRLEDGRIGRDQQIVST.

This is an uncharacterized protein from Bacillus subtilis (strain 168).